A 407-amino-acid polypeptide reads, in one-letter code: Phosphopentomutase (407 aa).

Aspartate 10, aspartate 306, histidine 311, aspartate 347, histidine 348, and histidine 359 together coordinate Mn(2+).

The protein belongs to the phosphopentomutase family. Mn(2+) serves as cofactor.

The protein resides in the cytoplasm. It catalyses the reaction 2-deoxy-alpha-D-ribose 1-phosphate = 2-deoxy-D-ribose 5-phosphate. The catalysed reaction is alpha-D-ribose 1-phosphate = D-ribose 5-phosphate. Its pathway is carbohydrate degradation; 2-deoxy-D-ribose 1-phosphate degradation; D-glyceraldehyde 3-phosphate and acetaldehyde from 2-deoxy-alpha-D-ribose 1-phosphate: step 1/2. In terms of biological role, isomerase that catalyzes the conversion of deoxy-ribose 1-phosphate (dRib-1-P) and ribose 1-phosphate (Rib-1-P) to deoxy-ribose 5-phosphate (dRib-5-P) and ribose 5-phosphate (Rib-5-P), respectively. This Yersinia enterocolitica serotype O:8 / biotype 1B (strain NCTC 13174 / 8081) protein is Phosphopentomutase.